An 894-amino-acid chain; its full sequence is CWF19-like protein 2 (894 aa).

Residues M1 to Q147 are disordered. A compositionally biased stretch (basic and acidic residues) spans E13–D56. Residues E13–E107 adopt a coiled-coil conformation. S75 is subject to Phosphoserine. Residues V76–K99 are compositionally biased toward basic residues. Basic and acidic residues predominate over residues P128–Q147. Residues S166–D281 are a coiled coil. K171 is covalently cross-linked (Glycyl lysine isopeptide (Lys-Gly) (interchain with G-Cter in SUMO2)). Residues E270 to R284 show a composition bias toward basic and acidic residues. The tract at residues E270–E483 is disordered. Residues T320–E330 are compositionally biased toward polar residues. A compositionally biased stretch (basic and acidic residues) spans F332–N352. A phosphoserine mark is found at S360 and S372. Basic and acidic residues-rich tracts occupy residues K410–H430 and T440–K473. A phosphoserine mark is found at S479 and S484. Positions K502–T530 form a coiled coil. The tract at residues N561 to E583 is disordered. A Glycyl lysine isopeptide (Lys-Gly) (interchain with G-Cter in SUMO2) cross-link involves residue K604. Residues A644–C675 are a coiled coil.

This sequence belongs to the CWF19 family.

This Homo sapiens (Human) protein is CWF19-like protein 2 (CWF19L2).